The primary structure comprises 113 residues: MSNPELPIKFTDSAASKVLSLITEEENPALKLRVYVTGGGCSGFQYGFTFDEKVNDGDMTIEKQGVMMVIDPMSLQYLVDGEVDYLESLEGSRFVVNNPNATTTCGCGSSFSI.

3 residues coordinate iron-sulfur cluster: cysteine 41, cysteine 105, and cysteine 107.

Belongs to the HesB/IscA family. Homodimer. Iron-sulfur cluster serves as cofactor.

Its function is as follows. Required for insertion of 4Fe-4S clusters for at least IspG. In Colwellia psychrerythraea (strain 34H / ATCC BAA-681) (Vibrio psychroerythus), this protein is Iron-sulfur cluster insertion protein ErpA.